The following is a 445-amino-acid chain: MTDNINIVHKKLFNVIDANFTKILKLKGVVNDIDDNGKFLTIKTLDTERTLKCRTKDNFTKVDVGDVVDVVGNLQLDSNDLSNIYLDLKYLSKQSTFDPSKALSIHNKLLVYLNEHEKVSKVVKKIHKKSLPKQIYNVALIAFPTGINLVNTFKTEFKNKCVGNLYTFYMDTDKTDVSIVSALEYFRKYRNIDIICLLTDQLNIMETCKLSSKEIAKVFLSRKNCPYILSIVSDSSEKNPEPITALLSNKKIETTLAAVNFISEVQWEYRQKVNRAVDLVKEKFYIHMDKKIKKLQQYEVLIWNLNKTSPPINSTDNLKNLLRNKMTEEFDRLNRIETELVNNIIMSDPIQKIVNNIDMFDSNIFMKIVDSIIDKMKNDKAQDKSLATTIKENALRQNLAFQSGQVDINKSRTLQDALVEEMKDHITQDPYLNYKERDENDIVDP.

This is an uncharacterized protein from Acanthamoeba polyphaga mimivirus (APMV).